Consider the following 178-residue polypeptide: Caveolin-1 (178 aa).

An N-acetylserine modification is found at Ser-2. A Phosphoserine modification is found at Ser-2. Residues 2–94 (SGGKYVDSEG…WKASFTTFTV (93 aa)) are required for homooligomerization. Topologically, residues 2 to 104 (SGGKYVDSEG…TKYWFYRLLS (103 aa)) are cytoplasmic. Residue Lys-5 is modified to N6-acetyllysine; alternate. Lys-5 participates in a covalent cross-link: Glycyl lysine isopeptide (Lys-Gly) (interchain with G-Cter in ubiquitin); alternate. Tyr-6 carries the post-translational modification Phosphotyrosine. Ser-9 carries the post-translational modification Phosphoserine. The residue at position 14 (Tyr-14) is a Phosphotyrosine; by ABL1. Tyr-25 is modified (phosphotyrosine). Glycyl lysine isopeptide (Lys-Gly) (interchain with G-Cter in ubiquitin) cross-links involve residues Lys-26, Lys-30, Lys-39, Lys-47, and Lys-57. The segment at 82-94 (DGIWKASFTTFTV) is interaction with CAVIN3. Residues 105-125 (TIFGIPMALIWGIYFAILSFL) constitute an intramembrane region (helical). Residues 126 to 178 (HIWAVVPCIKSFLIEIQCISRVYSIYVHTFCDPLFEAIGKIFSNVRISMQKEI) are Cytoplasmic-facing. The segment at 131 to 142 (VPCIKSFLIEIQ) is interacts with SPRY1, SPRY2, SPRY3 and SPRY4. 3 S-palmitoyl cysteine lipidation sites follow: Cys-133, Cys-143, and Cys-156. The tract at residues 149–160 (SIYVHTFCDPLF) is interacts with SPRY1, SPRY2, and SPRY4. The segment at 167–178 (FSNVRISMQKEI) is interacts with SPRY1, SPRY2, SPRY3 and SPRY4.

Belongs to the caveolin family. In terms of assembly, homooligomer. Interacts with GLIPR2. Interacts with NOSTRIN. Interacts with SNAP25 and STX1A. Interacts (via the N-terminus) with DPP4; the interaction is direct. Interacts with CTNNB1, CDH1 and JUP. Interacts with PACSIN2; this interaction induces membrane tubulation. Interacts with SLC7A9. Interacts with BMX and BTK. Interacts with TGFBR1. Interacts with CAVIN3 (via leucine-zipper domain) in a cholesterol-sensitive manner. Interacts with CAVIN1. Interacts with EHD2 in a cholesterol-dependent manner. Forms a ternary complex with UBXN6 and VCP; mediates CAV1 targeting to lysosomes for degradation. Interacts with ABCG1; this interaction regulates ABCG1-mediated cholesterol efflux. Interacts with NEU3; this interaction enhances NEU3 sialidase activity within caveola. Interacts (via C-terminus) with SPRY1, SPRY2 (via C-terminus), SPRY3, and SPRY4. Interacts with IGFBP5; this interaction allows trafficking of IGFBP5 from the plasma membrane to the nucleus. Phosphorylated at Tyr-14 by ABL1 in response to oxidative stress. In terms of processing, ubiquitinated. Undergo monoubiquitination and multi- and/or polyubiquitination. Monoubiquitination of N-terminal lysines promotes integration in a ternary complex with UBXN6 and VCP which promotes oligomeric CAV1 targeting to lysosomes for degradation. Ubiquitinated by ZNRF1; leading to degradation and modulation of the TLR4-mediated immune response.

It is found in the golgi apparatus membrane. It localises to the cell membrane. The protein resides in the membrane. The protein localises to the caveola. Its subcellular location is the membrane raft. May act as a scaffolding protein within caveolar membranes. Forms a stable heterooligomeric complex with CAV2 that targets to lipid rafts and drives caveolae formation. Mediates the recruitment of CAVIN proteins (CAVIN1/2/3/4) to the caveolae. Interacts directly with G-protein alpha subunits and can functionally regulate their activity. Involved in the costimulatory signal essential for T-cell receptor (TCR)-mediated T-cell activation. Its binding to DPP4 induces T-cell proliferation and NF-kappa-B activation in a T-cell receptor/CD3-dependent manner. Recruits CTNNB1 to caveolar membranes and may regulate CTNNB1-mediated signaling through the Wnt pathway. Negatively regulates TGFB1-mediated activation of SMAD2/3 by mediating the internalization of TGFBR1 from membrane rafts leading to its subsequent degradation. Binds 20(S)-hydroxycholesterol (20(S)-OHC). The chain is Caveolin-1 (CAV1) from Oryctolagus cuniculus (Rabbit).